The sequence spans 425 residues: Lipoyl synthase, mitochondrial (425 aa).

A mitochondrion-targeting transit peptide spans 1–33 (MAASSTRLRCLYASSSTWKTSPSQSLISLSRRY). A disordered region spans residues 17–55 (TWKTSPSQSLISLSRRYATTSSAPPTPSDESSSTLPKRR). The span at 33 to 51 (YATTSSAPPTPSDESSSTL) shows a compositional bias: polar residues. C142, C147, C153, C173, C177, C180, and S388 together coordinate [4Fe-4S] cluster. The 222-residue stretch at 156–377 (GSDKSAATAT…RQRALEMGFL (222 aa)) folds into the Radical SAM core domain.

Belongs to the radical SAM superfamily. Lipoyl synthase family. [4Fe-4S] cluster is required as a cofactor.

Its subcellular location is the mitochondrion. The catalysed reaction is [[Fe-S] cluster scaffold protein carrying a second [4Fe-4S](2+) cluster] + N(6)-octanoyl-L-lysyl-[protein] + 2 oxidized [2Fe-2S]-[ferredoxin] + 2 S-adenosyl-L-methionine + 4 H(+) = [[Fe-S] cluster scaffold protein] + N(6)-[(R)-dihydrolipoyl]-L-lysyl-[protein] + 4 Fe(3+) + 2 hydrogen sulfide + 2 5'-deoxyadenosine + 2 L-methionine + 2 reduced [2Fe-2S]-[ferredoxin]. It participates in protein modification; protein lipoylation via endogenous pathway; protein N(6)-(lipoyl)lysine from octanoyl-[acyl-carrier-protein]: step 2/2. Catalyzes the radical-mediated insertion of two sulfur atoms into the C-6 and C-8 positions of the octanoyl moiety bound to the lipoyl domains of lipoate-dependent enzymes, thereby converting the octanoylated domains into lipoylated derivatives. The protein is Lipoyl synthase, mitochondrial of Talaromyces marneffei (strain ATCC 18224 / CBS 334.59 / QM 7333) (Penicillium marneffei).